A 1055-amino-acid chain; its full sequence is MDS1 and EVI1 complex locus protein EVI1-A (1055 aa).

C2H2-type zinc fingers lie at residues 21–48, 75–97, and 103–125; these read YRCE…VTPH, HECK…LLSH, and YKCD…QMSH. The C2H2-type 4; degenerate zinc-finger motif lies at 131–155; the sequence is YECENCSKQVFTDPSNLQRHIRSQH. 2 C2H2-type zinc fingers span residues 161-183 and 189-211; these read HACS…KHIH and FVCE…KRMH. The C2H2-type 7; atypical zinc finger occupies 218 to 240; it reads IKCKDCGQMFSTTSSLNKHRRFC. 3 disordered regions span residues 324–345, 372–423, and 531–621; these read PVKG…VNQP, FITE…SDKD, and VPLK…PELP. The segment covering 332–345 has biased composition (polar residues); sequence EQSSKSQSPHVNQP. Positions 381 to 392 are enriched in basic and acidic residues; the sequence is RPHEKISDHSES. Over residues 399-413 the composition is skewed to polar residues; it reads STPSGSDLETTSGSD. The Nuclear localization signal signature appears at 422-435; the sequence is KDKLKENGKLYKDK. A compositionally biased stretch (basic and acidic residues) spans 531-566; it reads VPLKIEPESPKETKKVQKGKTESPFDLTTKRKEEKA. A CTBP-binding motif 1 motif is present at residues 554 to 558; the sequence is PFDLT. Positions 569 to 583 are enriched in polar residues; that stretch reads NVPSKSGAPTSSNHD. Positions 585 to 589 match the CTBP-binding motif 2 motif; it reads PLDLS. Positions 591-601 are enriched in polar residues; the sequence is GSRSRAATTKQ. The segment covering 602-621 has biased composition (basic and acidic residues); the sequence is TEPRKNHIFNEKKDMDPELP. 3 C2H2-type zinc fingers span residues 734-756, 762-785, and 791-813; these read YTCR…LRTH, YRCK…RNIH, and FKCH…LKKH. Disordered regions lie at residues 813-837 and 922-957; these read HENG…GPIL and SVDE…EDFK. The span at 816–827 shows a compositional bias: polar residues; sequence GNLSGTAASSPH. Acidic residues predominate over residues 944 to 954; that stretch reads DDEDDDDDEEE.

Homooligomer. Interacts with ctbp. Expressed dynamically during embryonic development; in the developing pronephros, specific areas of the brain (forebrain, midbrain and hindbrain), and in the majority of the visceral arch, and head mesenchyme derived from neural crest cells. Within the pronephros, expressed in the ventroposterior region of the pronephros anlagen from stage 20 (and is absent from the splanchnic layer that forms the glomus), then expression becomes restricted to the distal tubule and duct by the tadpole stage. In adults, expressed in various tissues including kidney, lung, testis, spleen and stomach.

Its subcellular location is the nucleus. It localises to the nucleus speckle. Functionally, transcriptional repressor during pronephros development. Plays a role in regionalization of the pronephros; may promote formation of the distal tubule and duct over formation of the glomus and proximal tubule. The polypeptide is MDS1 and EVI1 complex locus protein EVI1-A (mecom-a) (Xenopus laevis (African clawed frog)).